Here is a 359-residue protein sequence, read N- to C-terminus: Aromatic amino acid aminotransferase (359 aa).

Residues methionine 1–leucine 12 show a composition bias toward basic and acidic residues. The disordered stretch occupies residues methionine 1–glycine 21. Lysine 223 is subject to N6-(pyridoxal phosphate)lysine.

This sequence belongs to the class-II pyridoxal-phosphate-dependent aminotransferase family. In terms of assembly, homodimer. Pyridoxal 5'-phosphate is required as a cofactor.

It catalyses the reaction an aromatic L-alpha-amino acid + 2-oxoglutarate = an aromatic oxo-acid + L-glutamate. Functionally, aminotransferase that catalyzes the conversion of aromatic amino acids and 2-oxoglutarate into corresponding aromatic oxo acids and L-glutamate. This chain is Aromatic amino acid aminotransferase, found in Streptomyces coelicolor (strain ATCC BAA-471 / A3(2) / M145).